Reading from the N-terminus, the 638-residue chain is Chaperone protein DnaK (638 aa).

At Thr200 the chain carries Phosphothreonine; by autocatalysis. A disordered region spans residues 599–623 (LHMAATAEQQSASTGAGAGSSAKVD). Over residues 609 to 620 (SASTGAGAGSSA) the composition is skewed to low complexity.

The protein belongs to the heat shock protein 70 family.

Functionally, acts as a chaperone. The polypeptide is Chaperone protein DnaK (Xylella fastidiosa (strain M12)).